We begin with the raw amino-acid sequence, 340 residues long: Alcohol dehydrogenase (340 aa).

The Zn(2+) site is built by C40 and H63.

It belongs to the zinc-containing alcohol dehydrogenase family. Zn(2+) is required as a cofactor.

The catalysed reaction is a primary alcohol + NAD(+) = an aldehyde + NADH + H(+). It catalyses the reaction a secondary alcohol + NAD(+) = a ketone + NADH + H(+). The chain is Alcohol dehydrogenase (adhA) from Rhizobium meliloti (strain 1021) (Ensifer meliloti).